We begin with the raw amino-acid sequence, 244 residues long: Phosphoadenosine 5'-phosphosulfate reductase (244 aa).

C239 functions as the Nucleophile; cysteine thiosulfonate intermediate in the catalytic mechanism.

It belongs to the PAPS reductase family. CysH subfamily.

Its subcellular location is the cytoplasm. The catalysed reaction is [thioredoxin]-disulfide + sulfite + adenosine 3',5'-bisphosphate + 2 H(+) = [thioredoxin]-dithiol + 3'-phosphoadenylyl sulfate. Its pathway is sulfur metabolism; hydrogen sulfide biosynthesis; sulfite from sulfate: step 3/3. Catalyzes the formation of sulfite from phosphoadenosine 5'-phosphosulfate (PAPS) using thioredoxin as an electron donor. The chain is Phosphoadenosine 5'-phosphosulfate reductase from Buchnera aphidicola subsp. Acyrthosiphon pisum (strain 5A).